The chain runs to 552 residues: MGGNMSRVVKAPTGNKMVCKGWLQEAAYRMIQNNLDPVIAEHPENLVVYGGIGKAARNWESFDKILEALKELENDETLLVQSGKPIGILKTHEDAPRVLLANSNLVPKWATWEHFNELDKKGLMMYGQMTAGSWIYIGTQGIIQGTYESFVEAGRQHFGGNLTGRVILTAGLGGMGGAQPLAGVFAGACVLAVEIDPTRIQKRLETKYVDEVATDLDDALARIKKYTAAGEAKSIALQGNMATVIHQLIEKNFTPDLLTDQTSAHDPLVGYIPEGYTVETAKTFREQDQKAYLKAAYDSMAKHVRGMLAMKDRGAVTFDYGNNLRARAQEAGVENAFDYPGFVPAFIRPLFCKGSGPFRWVALSGDPNDIKVTDDAMRKLFPHKKDLLRWLDMAEERIAFQGLPARICWLEYGERAKAGLMFNQLVAEGKVKAPIVIGRDHLDCGSVASPNRETEAMKDGSDAVSDWALLNALVNTACGATWVSLHHGGGVGMGYSQHAGQVIVADGTEKAARRLERVLTADPAMGVFRHLDAGYELAHDIAKERGVRSLWL.

Residues 50 to 51, Gln-128, 174 to 176, Glu-194, Arg-199, 261 to 265, 271 to 272, and Tyr-320 contribute to the NAD(+) site; these read GG, GMG, QTSAH, and YI. Cys-408 is an active-site residue. Residue Gly-490 coordinates NAD(+).

The protein belongs to the urocanase family. It depends on NAD(+) as a cofactor.

The protein resides in the cytoplasm. The catalysed reaction is 4-imidazolone-5-propanoate = trans-urocanate + H2O. Its pathway is amino-acid degradation; L-histidine degradation into L-glutamate; N-formimidoyl-L-glutamate from L-histidine: step 2/3. Its function is as follows. Catalyzes the conversion of urocanate to 4-imidazolone-5-propionate. In Bdellovibrio bacteriovorus (strain ATCC 15356 / DSM 50701 / NCIMB 9529 / HD100), this protein is Urocanate hydratase.